The chain runs to 499 residues: Glycerol kinase (499 aa).

Threonine 12 is an ADP binding site. Positions 12, 13, and 14 each coordinate ATP. Sn-glycerol 3-phosphate is bound at residue threonine 12. Arginine 16 serves as a coordination point for ADP. Sn-glycerol 3-phosphate-binding residues include arginine 82, glutamate 83, tyrosine 135, and aspartate 245. Residues arginine 82, glutamate 83, tyrosine 135, aspartate 245, and glutamine 246 each coordinate glycerol. Residues threonine 267 and glycine 310 each contribute to the ADP site. The ATP site is built by threonine 267, glycine 310, glutamine 314, and glycine 411. Residues glycine 411 and asparagine 415 each coordinate ADP.

Belongs to the FGGY kinase family. Homotetramer and homodimer (in equilibrium).

It catalyses the reaction glycerol + ATP = sn-glycerol 3-phosphate + ADP + H(+). It participates in polyol metabolism; glycerol degradation via glycerol kinase pathway; sn-glycerol 3-phosphate from glycerol: step 1/1. Its activity is regulated as follows. Activated by phosphorylation and inhibited by fructose 1,6-bisphosphate (FBP). Functionally, key enzyme in the regulation of glycerol uptake and metabolism. Catalyzes the phosphorylation of glycerol to yield sn-glycerol 3-phosphate. The polypeptide is Glycerol kinase (Clostridium beijerinckii (strain ATCC 51743 / NCIMB 8052) (Clostridium acetobutylicum)).